Reading from the N-terminus, the 425-residue chain is Trigger factor (425 aa).

A PPIase FKBP-type domain is found at 163–248 (GDTAVIDFEG…VHEIKTKELP (86 aa)).

Belongs to the FKBP-type PPIase family. Tig subfamily.

The protein resides in the cytoplasm. It catalyses the reaction [protein]-peptidylproline (omega=180) = [protein]-peptidylproline (omega=0). In terms of biological role, involved in protein export. Acts as a chaperone by maintaining the newly synthesized protein in an open conformation. Functions as a peptidyl-prolyl cis-trans isomerase. This is Trigger factor from Bacillus cereus (strain ATCC 10987 / NRS 248).